We begin with the raw amino-acid sequence, 424 residues long: Tol-Pal system protein TolB (424 aa).

Positions 1–16 (MKQLLVLILSLYTTLA) are cleaved as a signal peptide.

The protein belongs to the TolB family. In terms of assembly, the Tol-Pal system is composed of five core proteins: the inner membrane proteins TolA, TolQ and TolR, the periplasmic protein TolB and the outer membrane protein Pal. They form a network linking the inner and outer membranes and the peptidoglycan layer.

The protein resides in the periplasm. In terms of biological role, part of the Tol-Pal system, which plays a role in outer membrane invagination during cell division and is important for maintaining outer membrane integrity. This chain is Tol-Pal system protein TolB, found in Ruthia magnifica subsp. Calyptogena magnifica.